Here is a 373-residue protein sequence, read N- to C-terminus: Plasmepsin VIII (373 aa).

An N-terminal signal peptide occupies residues 1–21 (MNKFFVFPLLLILNSIVLVKS). The 321-residue stretch at 50 to 370 (FIGEISIGNP…EKDNMRIGLA (321 aa)) folds into the Peptidase A1 domain. Active-site residues include Asp68 and Asp258.

This sequence belongs to the peptidase A1 family.

Functionally, during the development in the mosquito vector, plays an essential role in sporozoite egress from the oocyst and sporozoite gliding motility, which is required for the invasion of salivary glands and subsequent transmission to the host. The chain is Plasmepsin VIII from Plasmodium berghei (strain Anka).